We begin with the raw amino-acid sequence, 415 residues long: Adipocyte plasma membrane-associated protein (415 aa).

At 1 to 39 (MNEPEGLRFRRLNRPHIITDETHEPQYKATSTYSGKVFR) the chain is on the cytoplasmic side. Residues 40–60 (VTLLTMVAFLLLPLLVVVFVL) traverse the membrane as a helical segment. The Extracellular portion of the chain corresponds to 61-412 (ESPIQPEVFS…RSPYLCKLDL (352 aa)). N159 carries N-linked (GlcNAc...) asparagine glycosylation.

This sequence belongs to the strictosidine synthase family.

The protein resides in the membrane. The protein is Adipocyte plasma membrane-associated protein (apmap) of Danio rerio (Zebrafish).